Consider the following 2149-residue polypeptide: Serine/threonine-protein kinase WNK2 (2149 aa).

Over residues 1–10 (MDGDGGRRDA) the composition is skewed to basic and acidic residues. Disordered stretches follow at residues 1–75 (MDGD…QRRV) and 87–183 (ERAR…EDDL). Arg-19 and Arg-30 each carry omega-N-methylarginine. Ser-45 bears the Phosphoserine mark. Residues 95 to 114 (APAPAAPAAPPGSPSVPSDP) show a composition bias toward pro residues. Residues 161 to 172 (AKPEPGRARKDE) are compositionally biased toward basic and acidic residues. Residues 173–182 (PEEEEDDEDD) are compositionally biased toward acidic residues. One can recognise a Protein kinase domain in the interval 195-453 (LKFDIELGRG…IKDLLSHAFF (259 aa)). Residues Ser-205, 275–278 (TELM), and Lys-325 each bind ATP. Asp-342 (proton acceptor) is an active-site residue. Ser-352 and Ser-356 each carry phosphoserine; by autocatalysis. Position 560 is a phosphoserine (Ser-560). Disordered stretches follow at residues 578–630 (HAQS…DSQS), 703–728 (SMSF…APPV), and 1067–1133 (QEEQ…ERAS). A compositionally biased stretch (polar residues) spans 605-625 (ASVTSLASDSTFDSGQGSTVY). A compositionally biased stretch (pro residues) spans 709 to 728 (VLPPPSTPVPTGPSQPAPPV). Over residues 1081-1092 (QSSESFGGSDVT) the composition is skewed to polar residues. Phosphoserine is present on Ser-1098. Residues 1115–1126 (ARKHHRRSTRAR) show a composition bias toward basic residues. Ser-1210 is subject to Phosphoserine. 2 disordered regions span residues 1211-1234 (EDTD…CGLA) and 1270-1502 (PATD…GFVD). Composition is skewed to low complexity over residues 1275–1292 (SESS…EASQ) and 1317–1353 (SQAG…STVP). Positions 1386 to 1400 (RSAQCTAQPLSTGQG) are enriched in polar residues. The segment covering 1470-1485 (LPSPPLGPTAPPPPPS) has biased composition (pro residues). Phosphoserine occurs at positions 1507, 1566, and 1594. Disordered stretches follow at residues 1521-1727 (VPTS…PSSP) and 1739-1778 (ASSI…GGVA). A compositionally biased stretch (polar residues) spans 1553-1567 (SDKTPSLTQQTQPSL). Residues 1587 to 1597 (SSPMTAESSSS) show a composition bias toward low complexity. Positions 1610–1629 (ASDSSTAPSVPQDASGSSVP) are enriched in polar residues. Ser-1725, Ser-1726, Ser-1770, and Ser-1797 each carry phosphoserine. Residues 1916-1928 (ASSTGHLSDSSRG) show a composition bias toward polar residues. A disordered region spans residues 1916–1947 (ASSTGHLSDSSRGPPTKDPRGTKAVQTQQPCS). Ser-1962 bears the Phosphoserine mark. Over residues 2018 to 2031 (SSLYDSPGSSTSSL) the composition is skewed to polar residues. Disordered regions lie at residues 2018–2044 (SSLY…PTLH) and 2122–2149 (GPLS…EKPD). Residues 2122–2135 (GPLSTTATPGATPA) show a composition bias toward low complexity.

The protein belongs to the protein kinase superfamily. Ser/Thr protein kinase family. WNK subfamily. In terms of assembly, forms a complex with the phosphorylated form of STK39 in the brain. Mg(2+) serves as cofactor. Autophosphorylated. Autophosphorylation at Ser-352 and Ser-356 promotes its activity. Brain and heart.

It localises to the cytoplasm. The protein resides in the cell membrane. The enzyme catalyses L-seryl-[protein] + ATP = O-phospho-L-seryl-[protein] + ADP + H(+). It carries out the reaction L-threonyl-[protein] + ATP = O-phospho-L-threonyl-[protein] + ADP + H(+). Its activity is regulated as follows. Activation requires autophosphorylation of Ser-356 and, to a lower extent, Ser-352. In terms of biological role, serine/threonine-protein kinase component of the WNK2-SPAK/OSR1 kinase cascade, which plays an important role in the regulation of electrolyte homeostasis, cell signaling, survival, and proliferation. The WNK2-SPAK/OSR1 kinase cascade is composed of WNK2, which mediates phosphorylation and activation of downstream kinases OXSR1/OSR1 and STK39/SPAK. Following activation, OXSR1/OSR1 and STK39/SPAK catalyze phosphorylation of ion cotransporters, regulating their activity. Acts as an activator and inhibitor of sodium-coupled chloride cotransporters and potassium-coupled chloride cotransporters respectively. Activates SLC12A2, SCNN1A, SCNN1B, SCNN1D and SGK1 and inhibits SLC12A5. Negatively regulates the EGF-induced activation of the ERK/MAPK-pathway and the downstream cell cycle progression. Affects MAPK3/MAPK1 activity by modulating the activity of MAP2K1 and this modulation depends on phosphorylation of MAP2K1 by PAK1. WNK2 acts by interfering with the activity of PAK1 by controlling the balance of the activity of upstream regulators of PAK1 activity, RHOA and RAC1, which display reciprocal activity. The chain is Serine/threonine-protein kinase WNK2 from Mus musculus (Mouse).